A 364-amino-acid polypeptide reads, in one-letter code: Phosphoserine aminotransferase (364 aa).

R46 provides a ligand contact to L-glutamate. Pyridoxal 5'-phosphate is bound by residues 80 to 81 (AR), W106, T157, D176, and Q199. At K200 the chain carries N6-(pyridoxal phosphate)lysine. A pyridoxal 5'-phosphate-binding site is contributed by 241–242 (NT).

This sequence belongs to the class-V pyridoxal-phosphate-dependent aminotransferase family. SerC subfamily. In terms of assembly, homodimer. Pyridoxal 5'-phosphate serves as cofactor.

It localises to the cytoplasm. It carries out the reaction O-phospho-L-serine + 2-oxoglutarate = 3-phosphooxypyruvate + L-glutamate. It catalyses the reaction 4-(phosphooxy)-L-threonine + 2-oxoglutarate = (R)-3-hydroxy-2-oxo-4-phosphooxybutanoate + L-glutamate. The protein operates within amino-acid biosynthesis; L-serine biosynthesis; L-serine from 3-phospho-D-glycerate: step 2/3. Its pathway is cofactor biosynthesis; pyridoxine 5'-phosphate biosynthesis; pyridoxine 5'-phosphate from D-erythrose 4-phosphate: step 3/5. Catalyzes the reversible conversion of 3-phosphohydroxypyruvate to phosphoserine and of 3-hydroxy-2-oxo-4-phosphonooxybutanoate to phosphohydroxythreonine. The sequence is that of Phosphoserine aminotransferase from Vibrio parahaemolyticus serotype O3:K6 (strain RIMD 2210633).